The chain runs to 664 residues: Ubiquinol oxidase subunit 1 (664 aa).

2 consecutive transmembrane segments (helical) span residues 15–35 and 57–77; these read PILVGTFIGVVIVGVAVLGLI and LAAMYIILALVALFRGFADAI. Residue histidine 106 participates in heme b binding. 12 consecutive transmembrane segments (helical) span residues 109–129, 136–156, 190–210, 233–253, 278–298, 316–336, 347–367, 383–403, 414–434, 456–476, 490–510, and 603–623; these read IMIFFLAMAFMTGLFNFIVPL, VAFPFLNNLSFWMTAVAFILV, YIWAVQISGVGTLLTGVNFFV, LCASILIMVAFPVLTVAVGLL, LIWAWGHPEVYILVIPAFGVF, MVYATCSIMVLSFLVWVHHFF, FFGIATMIISIPTGIKLFNWL, WAVGFMITFTIGGMTGVMLAI, LFLIAHFHNTIIGGVYFGYIC, AFWFWFVGFYCAFVPLYIVGF, AWHPWLLVAEVGAVLVMLGIA, and ALIFGFAAVWYIWWLAAVGLV. Cu cation contacts are provided by histidine 284, tyrosine 288, histidine 333, and histidine 334. The segment at residues 284–288 is a cross-link (1'-histidyl-3'-tyrosine (His-Tyr)); sequence HPEVY. Histidine 419 provides a ligand contact to Fe(II)-heme a. Position 421 (histidine 421) interacts with heme b.

Belongs to the heme-copper respiratory oxidase family. In terms of assembly, heterotetramer of the subunits 1, 2, 3 and 4.

The protein localises to the cell membrane. Catalytic subunit of the enzyme. Electrons originating in a quinol are transferred to the bimetallic center formed by heme a and copper B. The protein is Ubiquinol oxidase subunit 1 (cyaA) of Acetobacter aceti.